Here is a 176-residue protein sequence, read N- to C-terminus: MPTNWKDSGLRWYWVVVLVFIADQVSKQWVLTNFELHESVNLLPFFNFTYVRNYGAAFSFLSDAGGWQKWLFTFIAVAFSTILTIWLRKQPTKVWRLNLAYTLVIGGALGNLIDRLQHGYVVDFLDFFWNTSHFAAFNIADSAICIGAGLIILDSFIGDDKEKSQNGQNDNNAAKE.

3 helical membrane-spanning segments follow: residues Trp12–Thr32, Trp67–Leu87, and Val94–Asp114. Catalysis depends on residues Asp123 and Asp141. The chain crosses the membrane as a helical span at residues His133–Leu153.

This sequence belongs to the peptidase A8 family.

It is found in the cell inner membrane. The enzyme catalyses Release of signal peptides from bacterial membrane prolipoproteins. Hydrolyzes -Xaa-Yaa-Zaa-|-(S,diacylglyceryl)Cys-, in which Xaa is hydrophobic (preferably Leu), and Yaa (Ala or Ser) and Zaa (Gly or Ala) have small, neutral side chains.. The protein operates within protein modification; lipoprotein biosynthesis (signal peptide cleavage). This protein specifically catalyzes the removal of signal peptides from prolipoproteins. The polypeptide is Lipoprotein signal peptidase (Shewanella sediminis (strain HAW-EB3)).